The sequence spans 229 residues: Somatolactin (229 aa).

Positions 1-21 (MAALQEVLLAVLLWPVLVTIS) are cleaved as a signal peptide. Disulfide bonds link Cys26–Cys36, Cys87–Cys203, and Cys220–Cys228. N-linked (GlcNAc...) asparagine glycosylation occurs at Asn143.

This sequence belongs to the somatotropin/prolactin family. Pituitary gland.

The protein resides in the secreted. The protein is Somatolactin of Tetraodon miurus (Congo puffer).